We begin with the raw amino-acid sequence, 96 residues long: Large ribosomal subunit protein bL28 (96 aa).

This sequence belongs to the bacterial ribosomal protein bL28 family.

This is Large ribosomal subunit protein bL28 from Methylobacterium nodulans (strain LMG 21967 / CNCM I-2342 / ORS 2060).